The following is a 141-amino-acid chain: HTH-type transcriptional repressor NsrR (141 aa).

An HTH rrf2-type domain is found at 2 to 129; that stretch reads QLTSFTDYGL…DQYTLADMVK (128 aa). A DNA-binding region (H-T-H motif) is located at residues 28–51; that stretch reads ISEVTEVYGVSRNHMVKIINQLSR. [2Fe-2S] cluster-binding residues include Cys91, Cys96, and Cys102.

[2Fe-2S] cluster is required as a cofactor.

Its function is as follows. Nitric oxide-sensitive repressor of genes involved in protecting the cell against nitrosative stress. May require iron for activity. In Pectobacterium atrosepticum (strain SCRI 1043 / ATCC BAA-672) (Erwinia carotovora subsp. atroseptica), this protein is HTH-type transcriptional repressor NsrR.